The primary structure comprises 157 residues: MNFTHINEQGYARMVDVSSKNDSERIAIAQAIVKMQPETMGKIRDGAIKKGDVLGVAQIAGIMGAKQTSALIPMCHPLNLTSVNLEFAFDEVNASIIIEAEVKTTGKTGVEMEAITAVSVAALTIYDMSKAVDRWMEITDIKLLEKSGGKSGHLVRD.

Substrate contacts are provided by residues 74–76 (MCH) and 112–113 (ME). The active site involves D127.

Belongs to the MoaC family. In terms of assembly, homohexamer; trimer of dimers.

The enzyme catalyses (8S)-3',8-cyclo-7,8-dihydroguanosine 5'-triphosphate = cyclic pyranopterin phosphate + diphosphate. It participates in cofactor biosynthesis; molybdopterin biosynthesis. Its function is as follows. Catalyzes the conversion of (8S)-3',8-cyclo-7,8-dihydroguanosine 5'-triphosphate to cyclic pyranopterin monophosphate (cPMP). The polypeptide is Cyclic pyranopterin monophosphate synthase (Syntrophomonas wolfei subsp. wolfei (strain DSM 2245B / Goettingen)).